The chain runs to 234 residues: MGKPGKKFLESKKKVNRDLKYGVLEALQTAIESSYAKFDETVDVAVRLGVDPRHADQMVRGTCVLPHGTGKDVRVLVFAKGEKEAEAKEAGADFVGNDDLVEKIQGGWLDFDKAIATPDMMGTVGKMGRILGPRGLMPNAKTGTVTFDVAKAVQELKAGKIDFRVERAGILHAPMGKVSFGAEKLLDNISAFFETVQRLKPSAAKGTYMKSIAVSTTMGPGVKIDPTLVKDIVK.

The protein belongs to the universal ribosomal protein uL1 family. As to quaternary structure, part of the 50S ribosomal subunit.

In terms of biological role, binds directly to 23S rRNA. The L1 stalk is quite mobile in the ribosome, and is involved in E site tRNA release. Its function is as follows. Protein L1 is also a translational repressor protein, it controls the translation of the L11 operon by binding to its mRNA. The chain is Large ribosomal subunit protein uL1 from Desulfatibacillum aliphaticivorans.